A 562-amino-acid polypeptide reads, in one-letter code: MTTTTTVKSDIEIAQEASMKKIQEIAADLNILEDELEPYGHYKGKLSLDIFKRLQNEKDGKVVLVTAINPTPAGEGKSTVTVGLGQAFNKIGKKTVIALREPSLGPTMGLKGGAAGGGFSQVVPMEDINLHFTGDIHAITTANNALAAFIDNHIQQGNTLGIDTRKIVWKRCVDLNDRALRNVVIGLGGPVQGVPREDGFDITVASEIMAVFCLATDIQDLKARLSRIVVAYNFANQPVTVKDLGVEGALTLLLKDALKPNLVQTLENTPAIIHGGPFANIAHGCNSVIATTMAAKLGDYVITEAGFGADLGAEKFLDIKARAAGIKPEAVVIVATIRALKMHGGVAKDQLKEENVDALAKGMENLQKHVETIQSFGVPFVIAINKFITDTDAEVAYLQEWCNERGYAVSLTEVWEKGGQGGVDLAEKVLKEIEKGENNYAPLYELELPLEEKIRTIAQKVYGAKDIEFAPKARKQLAQYEGEGWSNLPVCMAKTQYSLSDDATKLGRPSDFIVTIRELKPSIGAGFIVALTGTMLTMPGLPKQPAALQMDVNEDGKAVGLF.

71-78 (TPAGEGKS) is an ATP binding site.

The protein belongs to the formate--tetrahydrofolate ligase family.

It catalyses the reaction (6S)-5,6,7,8-tetrahydrofolate + formate + ATP = (6R)-10-formyltetrahydrofolate + ADP + phosphate. Its pathway is one-carbon metabolism; tetrahydrofolate interconversion. The protein is Formate--tetrahydrofolate ligase of Bacillus cereus (strain ATCC 10987 / NRS 248).